We begin with the raw amino-acid sequence, 209 residues long: Redox-sensing transcriptional repressor Rex (209 aa).

Positions L16–F55 form a DNA-binding region, H-T-H motif. Residue G90 to G95 coordinates NAD(+).

Belongs to the transcriptional regulatory Rex family. As to quaternary structure, homodimer.

It is found in the cytoplasm. Functionally, modulates transcription in response to changes in cellular NADH/NAD(+) redox state. The protein is Redox-sensing transcriptional repressor Rex of Bacillus cereus (strain ATCC 10987 / NRS 248).